The sequence spans 413 residues: Tyrosine--tRNA ligase (413 aa).

Y33 contributes to the L-tyrosine binding site. The short motif at 38–47 (PTADSLHVGH) is the 'HIGH' region element. L-tyrosine-binding residues include Y162 and Q166. A 'KMSKS' region motif is present at residues 225-229 (KFGKT). Residue K228 coordinates ATP. The region spanning 346–413 (TSAIDAIVNV…KKKYYLLEIK (68 aa)) is the S4 RNA-binding domain.

Belongs to the class-I aminoacyl-tRNA synthetase family. TyrS type 1 subfamily. Homodimer.

It localises to the cytoplasm. The enzyme catalyses tRNA(Tyr) + L-tyrosine + ATP = L-tyrosyl-tRNA(Tyr) + AMP + diphosphate + H(+). Functionally, catalyzes the attachment of tyrosine to tRNA(Tyr) in a two-step reaction: tyrosine is first activated by ATP to form Tyr-AMP and then transferred to the acceptor end of tRNA(Tyr). This is Tyrosine--tRNA ligase from Mesoplasma florum (strain ATCC 33453 / NBRC 100688 / NCTC 11704 / L1) (Acholeplasma florum).